The sequence spans 539 residues: Chaperonin GroEL (539 aa).

Residues 29 to 32, 86 to 90, Gly-413, 476 to 478, and Asp-492 each bind ATP; these read TLGP, DGTTT, and NAA.

It belongs to the chaperonin (HSP60) family. As to quaternary structure, forms a cylinder of 14 subunits composed of two heptameric rings stacked back-to-back. Interacts with the co-chaperonin GroES.

It localises to the cytoplasm. It catalyses the reaction ATP + H2O + a folded polypeptide = ADP + phosphate + an unfolded polypeptide.. Functionally, together with its co-chaperonin GroES, plays an essential role in assisting protein folding. The GroEL-GroES system forms a nano-cage that allows encapsulation of the non-native substrate proteins and provides a physical environment optimized to promote and accelerate protein folding. This chain is Chaperonin GroEL, found in Streptococcus thermophilus (strain CNRZ 1066).